The sequence spans 213 residues: uncharacterized protein (213 aa).

The next 3 helical transmembrane spans lie at 26–46 (FINF…GLKV), 112–132 (ASYI…AGIW), and 136–156 (AGLA…SFLI).

The protein resides in the cell membrane. This is an uncharacterized protein from Haemophilus influenzae (strain ATCC 51907 / DSM 11121 / KW20 / Rd).